The chain runs to 477 residues: Calcium/calmodulin-dependent protein kinase type 1G (477 aa).

The Protein kinase domain maps to 23-277 (FIFMEVLGSG…CEKALRHPWI (255 aa)). ATP is bound by residues 29–37 (LGSGAFSEV) and lysine 52. Residue aspartate 143 is the Proton acceptor of the active site. Positions 277-317 (IDGNTALHRDIYPSVSLQIQKNFAKSKWRQAFNAAAVVHHM) are autoinhibitory domain. The segment at 297 to 318 (KNFAKSKWRQAFNAAAVVHHMR) is calmodulin-binding. The disordered stretch occupies residues 326–388 (SPSVRQEVEN…SRPSAPSGGR (63 aa)). The segment covering 376–388 (SHSSRPSAPSGGR) has biased composition (low complexity).

It belongs to the protein kinase superfamily. CAMK Ser/Thr protein kinase family. CaMK subfamily. Post-translationally, may be prenylated on Cys-474. In terms of tissue distribution, highly expressed in brain, in neuronal cell bodies of the central nucleus of amygdala and ventromedial hypothalamic nucleus. Also detected in heart, testis, and kidney.

Its subcellular location is the cytoplasm. It is found in the golgi apparatus membrane. The protein resides in the cell membrane. It carries out the reaction L-seryl-[protein] + ATP = O-phospho-L-seryl-[protein] + ADP + H(+). It catalyses the reaction L-threonyl-[protein] + ATP = O-phospho-L-threonyl-[protein] + ADP + H(+). Activated by Ca(2+)/calmodulin. Binding of calmodulin is thought to result in a conformational change and leads to activation through phosphorylation by CAMKK1. Functionally, calcium/calmodulin-dependent protein kinase belonging to a proposed calcium-triggered signaling cascade. In vitro phosphorylates transcription factor CREB1. This is Calcium/calmodulin-dependent protein kinase type 1G (Camk1g) from Mus musculus (Mouse).